Consider the following 441-residue polypeptide: ATP-dependent RNA helicase RhlB (441 aa).

Residues 9–37 (QKFADFSLNKEIKTALNESGFEFCTPIQA) carry the Q motif motif. The region spanning 40 to 219 (LPILLQKKDI…YDHMNEPEKV (180 aa)) is the Helicase ATP-binding domain. Residue 53-60 (AQTGTGKT) coordinates ATP. The short motif at 165 to 168 (DEAD) is the DEAD box element. The Helicase C-terminal domain occupies 243-390 (KMRLLLSLIE…VTNYDSEGLL (148 aa)). A disordered region spans residues 401-441 (RKHNNRPQQGRNNSGRPQGRNGNRAGGRNGPRRHDQVRRHS).

The protein belongs to the DEAD box helicase family. RhlB subfamily. In terms of assembly, component of the RNA degradosome, which is a multiprotein complex involved in RNA processing and mRNA degradation.

The protein localises to the cytoplasm. The catalysed reaction is ATP + H2O = ADP + phosphate + H(+). Functionally, DEAD-box RNA helicase involved in RNA degradation. Has RNA-dependent ATPase activity and unwinds double-stranded RNA. The polypeptide is ATP-dependent RNA helicase RhlB (Shewanella woodyi (strain ATCC 51908 / MS32)).